Reading from the N-terminus, the 83-residue chain is Defensin-like protein 194 (83 aa).

The first 27 residues, 1–27 (MAMKSVSNFAIFLILFLVTSEISEIEA), serve as a signal peptide directing secretion. Disulfide bonds link Cys32-Cys78, Cys44-Cys68, Cys53-Cys73, and Cys57-Cys75.

Belongs to the DEFL family. Protease inhibitor I18 (RTI/MTI-2) subfamily.

The protein localises to the secreted. The sequence is that of Defensin-like protein 194 (ATTI3) from Arabidopsis thaliana (Mouse-ear cress).